Reading from the N-terminus, the 323-residue chain is MIFSTFEHILTHISFSVISIVITIQLITLLINETVGLYVSSEKGMIATFFCITGLLVTRWIYLRHLPLSDLYESLLFLSWAFSIIHLFTYFKKYKNHLSVSAITAPSTIFTQGFATSGFLTEMHQSPLLVPALQSHWLMMHVSMMVLGYAALLCGSLFSVALIVITFQKAIRIFCKNNNLLNALFSFNEIQYINEGNYFVRNTSFFSSKNYYKSQLIQQLDHWSYRIISLGFIFLSIGILSGAVWANETWGSYWNWDPKETWAFITWTIFAIYLHTRTNKNFEGVNSAIVASMGFLIIWICYFGVNLLGIGLHSYGSFTLTSN.

Transmembrane regions (helical) follow at residues 9–29 (ILTH…LITL), 37–57 (LYVS…GLLV), 71–91 (LYES…FTYF), 100–120 (VSAI…SGFL), 145–165 (MVLG…LIVI), 227–247 (IISL…VWAN), 261–275 (TWAF…IYLH), and 288–308 (AIVA…VNLL).

The protein belongs to the CcmF/CycK/Ccl1/NrfE/CcsA family. In terms of assembly, may interact with Ccs1.

Its subcellular location is the plastid. The protein resides in the chloroplast thylakoid membrane. Its function is as follows. Required during biogenesis of c-type cytochromes (cytochrome c6 and cytochrome f) at the step of heme attachment. The sequence is that of Cytochrome c biogenesis protein CcsA from Cucumis sativus (Cucumber).